The chain runs to 411 residues: Citrate synthase (411 aa).

Active-site residues include histidine 304 and aspartate 363.

This sequence belongs to the citrate synthase family.

It catalyses the reaction oxaloacetate + acetyl-CoA + H2O = citrate + CoA + H(+). The protein operates within carbohydrate metabolism; tricarboxylic acid cycle; isocitrate from oxaloacetate: step 1/2. The chain is Citrate synthase (gltA) from Rickettsia akari.